Consider the following 181-residue polypeptide: Small ribosomal subunit protein uS4 (181 aa).

Positions 108 to 177 constitute an S4 RNA-binding domain; it reads RRLQTMVYRQ…EGHPEIERIN (70 aa). A disordered region spans residues 161-181; the sequence is GTSPLTSEGHPEIERINKKRR. A compositionally biased stretch (basic and acidic residues) spans 169–181; sequence GHPEIERINKKRR.

Belongs to the universal ribosomal protein uS4 family. As to quaternary structure, part of the 30S ribosomal subunit. Contacts protein S5. The interaction surface between S4 and S5 is involved in control of translational fidelity.

Its function is as follows. One of the primary rRNA binding proteins, it binds directly to 16S rRNA where it nucleates assembly of the body of the 30S subunit. Functionally, with S5 and S12 plays an important role in translational accuracy. The protein is Small ribosomal subunit protein uS4 of Methanosphaerula palustris (strain ATCC BAA-1556 / DSM 19958 / E1-9c).